Reading from the N-terminus, the 790-residue chain is von Willebrand factor A domain-containing protein 2 (790 aa).

The N-terminal stretch at 1–22 (MRLPWVNGILAFLSSQVLQCLC) is a signal peptide. The VWFA 1 domain maps to 50 to 221 (DILILLDGSN…DAVNGLATSL (172 aa)). The EGF-like 1 domain maps to 295-332 (PDPCDSQPCKNGGTCIAEGQDKYHCVCPAGFGGDTECA). 3 disulfide bridges follow: Cys-298–Cys-309, Cys-303–Cys-319, and Cys-321–Cys-331. VWFA domains are found at residues 342–518 (DLLF…QKRI) and 532–702 (DLAF…EDSV). Positions 713–748 (PVNLCKPNPCMNDGVCILRQGSYRCDCRGWDGPHCE) constitute an EGF-like 2 domain. Intrachain disulfides connect Cys-717/Cys-728, Cys-722/Cys-737, and Cys-739/Cys-747. A disordered region spans residues 758-790 (WPQGLHSRSRQQRHSRKRRLKSVSGSRSSRKKP). Residues 764–778 (SRSRQQRHSRKRRLK) show a composition bias toward basic residues.

In terms of assembly, forms monomers and multimers.

The protein localises to the secreted. This is von Willebrand factor A domain-containing protein 2 (vwa2) from Xenopus laevis (African clawed frog).